The sequence spans 309 residues: Palmitoyltransferase ZDHHC19 (309 aa).

The next 2 helical transmembrane spans lie at 29 to 49 (LFAAFNVVLLVFFSGLFFAFP) and 59 to 79 (WAFPVITGSLFVLTFFSLVSL). A DHHC domain is found at 112 to 162 (QWCPKCCFHRPPRTYHCPWCNICVEDFDHHCKWVNNCIGHRNFRFFMLLVL). Cys-142 acts as the S-palmitoyl cysteine intermediate in catalysis. 2 helical membrane passes run 160–180 (LVLSLCLYSGAMLVTCLIFLV) and 193–213 (IAIVVAVSAAGLLVPLSLLLL). A compositionally biased stretch (pro residues) spans 280–294 (LHPPMSPSALNPPAP). Residues 280-309 (LHPPMSPSALNPPAPTSGSLQSREGTPGAW) form a disordered region.

It belongs to the DHHC palmitoyltransferase family.

The protein resides in the golgi apparatus membrane. It localises to the cytoplasm. It is found in the perinuclear region. It carries out the reaction L-cysteinyl-[protein] + hexadecanoyl-CoA = S-hexadecanoyl-L-cysteinyl-[protein] + CoA. Its function is as follows. Palmitoyltransferase that mediates palmitoylation oproteins, such as RRAS and SQSTM1. Catalyzes palmitoylation of RRAS, leading to increased cell viability. Acts as a positive regulator of autophagy by mediating palmitoylation of SQSTM1, promoting affinity between SQSTM1 and ATG8 proteins and recruitment of ubiquitinated cargo proteins to autophagosomes. Functionally, (Microbial infection) Promotes Chikungunya virus (CHIKV) replication by mediating viral nsp1 palmitoylation. This is Palmitoyltransferase ZDHHC19 from Homo sapiens (Human).